A 352-amino-acid polypeptide reads, in one-letter code: MANIDKDKLKAIEMAMGQIEKQFGKGSVMKLGEQGAPQMDAVSTGCLDLDIALGIGGVPKGRIIEIYGPESSGKTTVALHVVAEAQKLGGAAAYIDAEHALDPVYAKRLGVNIDDLVVSQPDTGEQALEITEALVRSGAIDVLVVDSVAALVPRAEIEGEMGDSHVGLQARLMSQALRKLTGTINKSNCVVIFINQLREKVGIMFGNPETTPGGRALKFYASVRMDIRRIDSIKQGDGITGNRTRVKIVKNKVAPPFKQAEFDIMYNEGISKEGNIVDVGVKENIVQKSGAWFSYGDIRLGQGRENAKQYLKENPSVALDIENQIREKYSLPLAKAVESTSVEKNTEESVES.

68–75 (GPESSGKT) is an ATP binding site.

The protein belongs to the RecA family.

It is found in the cytoplasm. Its function is as follows. Can catalyze the hydrolysis of ATP in the presence of single-stranded DNA, the ATP-dependent uptake of single-stranded DNA by duplex DNA, and the ATP-dependent hybridization of homologous single-stranded DNAs. It interacts with LexA causing its activation and leading to its autocatalytic cleavage. The sequence is that of Protein RecA from Clostridium perfringens (strain SM101 / Type A).